A 653-amino-acid polypeptide reads, in one-letter code: Hepatocyte growth factor activator serine protease (653 aa).

The N-terminal stretch at 1-34 (MGRQAWISSLCPLPRPCPFLLLLLLLVVPRGAQP) is a signal peptide. Positions 34 to 98 (PQAGRNHTEP…SSSPPGGQVL (65 aa)) are disordered. A propeptide spans 35–369 (QAGRNHTEPP…RLTACESLAR (335 aa)) (removed in mature form). Asparagine 39, asparagine 47, and asparagine 63 each carry an N-linked (GlcNAc...) asparagine glycan. Residues 47–59 (NVTATPVTPTIPV) are compositionally biased toward low complexity. The region spanning 100-147 (ESGQPCRFPFRYGGRMLHSCTSEGSAYRKWCATTHNYDRDRAWGYCAE) is the Fibronectin type-II domain. Disulfide bonds link cysteine 105–cysteine 130, cysteine 119–cysteine 145, cysteine 161–cysteine 172, cysteine 166–cysteine 183, cysteine 185–cysteine 194, cysteine 199–cysteine 227, cysteine 225–cysteine 234, cysteine 242–cysteine 253, cysteine 247–cysteine 264, cysteine 266–cysteine 275, cysteine 283–cysteine 364, cysteine 304–cysteine 346, cysteine 335–cysteine 359, cysteine 392–cysteine 519, cysteine 430–cysteine 446, cysteine 438–cysteine 508, cysteine 533–cysteine 602, cysteine 565–cysteine 581, and cysteine 592–cysteine 620. The EGF-like 1 domain maps to 157–195 (ILDPCASGPCLNGGTCSSTHDHGSYHCSCPLAFTGKDCG). Residues 197 to 237 (EKCFDETRYEYFEVGDHWARVSEGHVEQCGCMEGQARCEDT) enclose the Fibronectin type-I domain. Residues 238-276 (HHTACLSSPCLNGGTCHLIVGTGTSVCTCPLGYAGRFCN) form the EGF-like 2 domain. The Kringle domain occupies 283–364 (CFLGNGTEYR…SWEYCRLTAC (82 aa)). Asparagine 287 is a glycosylation site (N-linked (GlcNAc...) asparagine). Residues 406-644 (IIGGSSSLPG…YVDWINDRIR (239 aa)) enclose the Peptidase S1 domain. Histidine 445 serves as the catalytic Charge relay system. A glycan (N-linked (GlcNAc...) asparagine) is linked at asparagine 466. Catalysis depends on aspartate 495, which acts as the Charge relay system. N-linked (GlcNAc...) asparagine glycosylation occurs at asparagine 544. Catalysis depends on serine 596, which acts as the Charge relay system.

It belongs to the peptidase S1 family. In terms of assembly, heterodimer of a short chain and a long chain linked by a disulfide bond. The active form of HGFAC presents in the serum is derived from the COOH-terminal region of the precursor by the cleavage of bonds between Arg-369 and Val-370 and Arg-405 and Ile-406.

It localises to the secreted. In terms of biological role, serine protease that hydrolyzes the inactive zymogen hepatocyte growth factor (HGFsc) to an activated disulfide-linked heterodimer, then initiating hepatocyte growth factor receptor signaling pathway. In Mus musculus (Mouse), this protein is Hepatocyte growth factor activator serine protease.